The sequence spans 249 residues: RING finger protein 223 (249 aa).

A disordered region spans residues Met-1–Arg-44. Over residues Arg-17–Arg-44 the composition is skewed to low complexity. The RING-type zinc finger occupies Cys-51–Arg-102. The chain crosses the membrane as a helical span at residues Leu-199–Leu-219. Residues Pro-230–Asn-249 are disordered. Positions Ala-235–Asn-249 are enriched in low complexity.

The protein localises to the membrane. This Homo sapiens (Human) protein is RING finger protein 223 (RNF223).